The sequence spans 472 residues: Pyruvate kinase (472 aa).

Residue R33 participates in substrate binding. K(+) contacts are provided by N35, S37, and D67. 35–38 lines the ATP pocket; it reads NFSH. 2 residues coordinate ATP: R74 and K155. E220 contacts Mg(2+). G243, D244, and T276 together coordinate substrate. Mg(2+) is bound at residue D244.

This sequence belongs to the pyruvate kinase family. In terms of assembly, homotetramer. The cofactor is Mg(2+). K(+) serves as cofactor.

The enzyme catalyses pyruvate + ATP = phosphoenolpyruvate + ADP + H(+). Its pathway is carbohydrate degradation; glycolysis; pyruvate from D-glyceraldehyde 3-phosphate: step 5/5. In Mycobacterium tuberculosis (strain CDC 1551 / Oshkosh), this protein is Pyruvate kinase (pyk).